A 323-amino-acid polypeptide reads, in one-letter code: tRNA-dihydrouridine(16) synthase (323 aa).

Residues 7 to 9 (PME) and Gln-68 each bind FMN. The active-site Proton donor is the Cys-98. Residues Lys-139, 200-202 (NGE), and 224-225 (CR) each bind FMN.

Belongs to the Dus family. DusC subfamily. It depends on FMN as a cofactor.

The catalysed reaction is 5,6-dihydrouridine(16) in tRNA + NADP(+) = uridine(16) in tRNA + NADPH + H(+). The enzyme catalyses 5,6-dihydrouridine(16) in tRNA + NAD(+) = uridine(16) in tRNA + NADH + H(+). Functionally, catalyzes the synthesis of 5,6-dihydrouridine (D), a modified base found in the D-loop of most tRNAs, via the reduction of the C5-C6 double bond in target uridines. Specifically modifies U16 in tRNAs. In Vibrio cholerae serotype O1 (strain ATCC 39315 / El Tor Inaba N16961), this protein is tRNA-dihydrouridine(16) synthase.